The chain runs to 816 residues: Oxysterol-binding protein-related protein 1D (816 aa).

The PH domain occupies 92 to 229 (GAGVAGIMYK…WVEAFQVAKD (138 aa)). Residues 290-321 (KHIILLDTLRQLETEKIELEATVVDETKEHDS) are a coiled coil. A disordered region spans residues 340-362 (SASDSEADNESQDGADVESDEDD). Positions 344–362 (SEADNESQDGADVESDEDD) are enriched in acidic residues. Positions 735 to 764 (NGEYESANAEKLRLEQLQRQARRLQEKGWK) form a coiled coil.

It belongs to the OSBP family. In terms of tissue distribution, expressed in roots, leaves, stems and flowers.

Its function is as follows. May be involved in the transport of sterols. The chain is Oxysterol-binding protein-related protein 1D (ORP1D) from Arabidopsis thaliana (Mouse-ear cress).